Reading from the N-terminus, the 269-residue chain is tRNA pseudouridine synthase A (269 aa).

Asp55 acts as the Nucleophile in catalysis. Residue Tyr111 participates in substrate binding.

Belongs to the tRNA pseudouridine synthase TruA family.

It carries out the reaction uridine(38/39/40) in tRNA = pseudouridine(38/39/40) in tRNA. Formation of pseudouridine at positions 38, 39 and 40 in the anticodon stem and loop of transfer RNAs. The chain is tRNA pseudouridine synthase A from Methanosarcina barkeri (strain Fusaro / DSM 804).